The following is a 511-amino-acid chain: Glutamyl-tRNA(Gln) amidotransferase subunit A, mitochondrial (511 aa).

Catalysis depends on charge relay system residues Lys72 and Ser149. Ser173 acts as the Acyl-ester intermediate in catalysis.

The protein belongs to the amidase family. GatA subfamily. Subunit of the heterotrimeric GatCAB amidotransferase (AdT) complex, composed of A, B and C subunits.

Its subcellular location is the mitochondrion. It carries out the reaction L-glutamyl-tRNA(Gln) + L-glutamine + ATP + H2O = L-glutaminyl-tRNA(Gln) + L-glutamate + ADP + phosphate + H(+). Allows the formation of correctly charged Gln-tRNA(Gln) through the transamidation of misacylated Glu-tRNA(Gln) in the mitochondria. The reaction takes place in the presence of glutamine and ATP through an activated gamma-phospho-Glu-tRNA(Gln). The polypeptide is Glutamyl-tRNA(Gln) amidotransferase subunit A, mitochondrial (Fusarium vanettenii (strain ATCC MYA-4622 / CBS 123669 / FGSC 9596 / NRRL 45880 / 77-13-4) (Fusarium solani subsp. pisi)).